The primary structure comprises 72 residues: ATP synthase protein 8 (72 aa).

Residues 16-36 (WTLIALFLLFSFLVVSVLPAV) form a helical membrane-spanning segment.

It belongs to the ATPase protein 8 family. As to quaternary structure, F-type ATPases have 2 components, CF(1) - the catalytic core - and CF(0) - the membrane proton channel.

It localises to the mitochondrion membrane. Functionally, mitochondrial membrane ATP synthase (F(1)F(0) ATP synthase or Complex V) produces ATP from ADP in the presence of a proton gradient across the membrane which is generated by electron transport complexes of the respiratory chain. F-type ATPases consist of two structural domains, F(1) - containing the extramembraneous catalytic core and F(0) - containing the membrane proton channel, linked together by a central stalk and a peripheral stalk. During catalysis, ATP synthesis in the catalytic domain of F(1) is coupled via a rotary mechanism of the central stalk subunits to proton translocation. Part of the complex F(0) domain. Minor subunit located with subunit a in the membrane. This Metridium senile (Brown sea anemone) protein is ATP synthase protein 8 (MTATP8).